Reading from the N-terminus, the 228-residue chain is MSKIVLEAKDVYKHFTDGKSTVEVIKGLSLKIAAGEFVSIVGASGSGKSTLLHILGGLDQPTQGQVFLNEQRFDNLGEAERGFKRNQYLGFVYQFHHLLPEFSALENVAMPLMLRADTNYKEVKQQAEHLLDRVGLSHRLTHKPGELSGGERQRVALARALVARPAVMLADEPTGNLDRKTAFGIFELLSDLKQEFNMAMLIVTHDEQLAQSADSILHMQDGLWVDHS.

The 220-residue stretch at 6–225 folds into the ABC transporter domain; sequence LEAKDVYKHF…ILHMQDGLWV (220 aa). Position 42 to 49 (42 to 49) interacts with ATP; sequence GASGSGKS.

The protein belongs to the ABC transporter superfamily. Lipoprotein translocase (TC 3.A.1.125) family. The complex is composed of two ATP-binding proteins (LolD) and two transmembrane proteins (LolC and LolE).

It is found in the cell inner membrane. Its function is as follows. Part of the ABC transporter complex LolCDE involved in the translocation of mature outer membrane-directed lipoproteins, from the inner membrane to the periplasmic chaperone, LolA. Responsible for the formation of the LolA-lipoprotein complex in an ATP-dependent manner. The protein is Lipoprotein-releasing system ATP-binding protein LolD of Acinetobacter baylyi (strain ATCC 33305 / BD413 / ADP1).